A 145-amino-acid chain; its full sequence is Small ribosomal subunit protein uS19 (145 aa).

N-acetylalanine is present on Ala2. Lys108 is covalently cross-linked (Glycyl lysine isopeptide (Lys-Gly) (interchain with G-Cter in SUMO2)).

Belongs to the universal ribosomal protein uS19 family. In terms of assembly, component of the small ribosomal subunit.

It is found in the cytoplasm. In terms of biological role, component of the small ribosomal subunit. The ribosome is a large ribonucleoprotein complex responsible for the synthesis of proteins in the cell. This chain is Small ribosomal subunit protein uS19 (RPS15), found in Mesocricetus auratus (Golden hamster).